We begin with the raw amino-acid sequence, 202 residues long: UPF0301 protein BCG_0069 (202 aa).

The protein belongs to the UPF0301 (AlgH) family.

In Mycobacterium bovis (strain BCG / Pasteur 1173P2), this protein is UPF0301 protein BCG_0069.